Reading from the N-terminus, the 116-residue chain is MIYFGGIMAIAYAKLYEIIAKYIKDEKRAEELYNAVVEVIKEEKIIVKHELKDELKNELATKEDIMLAEERILRYVDNRFNQLDKKMTVGFVILILLYILTNPNAIELIKLLFGVK.

A helical transmembrane segment spans residues 89–109 (VGFVILILLYILTNPNAIELI).

This sequence belongs to the M.jannaschii MJ0023/MJ0349/MJ1072/MJ1074/MJ1107/MJECL16 family.

It is found in the membrane. This is an uncharacterized protein from Methanocaldococcus jannaschii (strain ATCC 43067 / DSM 2661 / JAL-1 / JCM 10045 / NBRC 100440) (Methanococcus jannaschii).